The primary structure comprises 63 residues: Beta-defensin 35 (63 aa).

An N-terminal signal peptide occupies residues 1 to 23 (MPQTFFVFCFLFFVFLQLFPGTG). Intrachain disulfides connect C31/C58, C38/C52, and C42/C59.

Belongs to the beta-defensin family. As to expression, expressed in testis, epididymis (caput, corpus and cauda), kidney and neonatal and adult brain.

The protein resides in the secreted. Functionally, has antibacterial activity. This chain is Beta-defensin 35 (Defb35), found in Mus musculus (Mouse).